Consider the following 496-residue polypeptide: Glycerol kinase (496 aa).

T11 contacts ADP. 3 residues coordinate ATP: T11, T12, and S13. T11 provides a ligand contact to sn-glycerol 3-phosphate. Residue R15 participates in ADP binding. Sn-glycerol 3-phosphate contacts are provided by R81, E82, Y133, and D242. 5 residues coordinate glycerol: R81, E82, Y133, D242, and Q243. ADP-binding residues include T264 and G307. The ATP site is built by T264, G307, Q311, and G408. The ADP site is built by G408 and N412.

Belongs to the FGGY kinase family.

The catalysed reaction is glycerol + ATP = sn-glycerol 3-phosphate + ADP + H(+). The protein operates within polyol metabolism; glycerol degradation via glycerol kinase pathway; sn-glycerol 3-phosphate from glycerol: step 1/1. With respect to regulation, inhibited by fructose 1,6-bisphosphate (FBP). Functionally, key enzyme in the regulation of glycerol uptake and metabolism. Catalyzes the phosphorylation of glycerol to yield sn-glycerol 3-phosphate. In Aromatoleum aromaticum (strain DSM 19018 / LMG 30748 / EbN1) (Azoarcus sp. (strain EbN1)), this protein is Glycerol kinase.